A 703-amino-acid chain; its full sequence is MRESTWVSLLLLLLLPTPQRGGPQDGRRSPEPEPERGPLQPFDLLYASGVAAYYSGDYERAVRDLEAALSSHRRLRDIRTRCARHCAARRPLAPPGAGPGAELPFFRAVLERARCSRSCQSQRLGGPASRHRVSEDVRSDFQRRVPYNYLQRAYIKLNQLEKAMEAAHTFFMANPEHMEMQQDLEDYKATARVEAPLLDREAKPHLESYNAGVKHYEADDFESAIKYFEQALREYFNEDMECRALCEGPQRFEEYEYLGYKGGLYEAIADHYMQVLVCQHECVRELATRPGRLSPIENFLPLHYDYLQFAYYRVGEYVKALECAKAYLMFHPDNEDVLDNVDFYESLLDDSTDPASIEAREDLTAFVKRHKLEAELIKLAAEGLGFSYAEPNYWISYGGRQDENRVPSGVNMDGAEVHGLSMGKKSPPKIGRDLREGGPLLYENITFVYNSEQLNGTQRVLLDNVLSQEQCRELHSVANGIMLVGDGYRGKTSPHTPNEKFEGATVLKALKFGYEGRVPLKSARLFYDISEKARKIVESYFMLNSTLYFSYTHMVCRTALSGQQDRRNDLSHPIHADNCLLDPEANECWKEPPAYTFRDYSALLYMNDDFDGGEFIFTEMDAKTVTASIKPKCGRMISFSSGGENPHGVKAVTRGQRCAVALWFTLDPLYRELERIQADEVIAILDQEQRGKHGLNINPKDEL.

The signal sequence occupies residues 1–21 (MRESTWVSLLLLLLLPTPQRG). A disordered region spans residues 17–40 (TPQRGGPQDGRRSPEPEPERGPLQ). Residues 25–36 (DGRRSPEPEPER) show a composition bias toward basic and acidic residues. TPR repeat units follow at residues 42-75 (FDLLYASGVAAYYSGDYERAVRDLEAALSSHRRL), 144-177 (RVPYNYLQRAYIKLNQLEKAMEAAHTFFMANPEH), 205-238 (HLESYNAGVKHYEADDFESAIKYFEQALREYFNE), and 301-334 (PLHYDYLQFAYYRVGEYVKALECAKAYLMFHPDN). Residues asparagine 444 and asparagine 544 are each glycosylated (N-linked (GlcNAc...) asparagine). Positions 552-666 (THMVCRTALS…RCAVALWFTL (115 aa)) constitute a Fe2OG dioxygenase domain. 3 residues coordinate Fe cation: histidine 575, aspartate 577, and histidine 647. Arginine 657 is a catalytic residue. Residues 700–703 (KDEL) carry the Prevents secretion from ER motif.

The protein belongs to the leprecan family. Fe cation is required as a cofactor. It depends on L-ascorbate as a cofactor. Detected in kidney. Detected on kidney tubular cells, pancreas acinar cells, Schwann cells of the peripheral nerve in the pinna, and in tunica adventitia, the smooth muscle layer of the aortic wall (at protein level). Detected in lung, skeletal muscle and kidney. Detected in kidney glomeruli and in prehypertrophic regions of long bone from neonates. In the eye, detected in the epithelial layer of the cornea and at lower levels in the sclera at the posterior end of the eye.

The protein localises to the endoplasmic reticulum. Its subcellular location is the sarcoplasmic reticulum. The protein resides in the golgi apparatus. The enzyme catalyses L-prolyl-[collagen] + 2-oxoglutarate + O2 = trans-3-hydroxy-L-prolyl-[collagen] + succinate + CO2. Its function is as follows. Prolyl 3-hydroxylase that catalyzes the post-translational formation of 3-hydroxyproline on collagens. Contributes to proline 3-hydroxylation of collagen COL4A1 and COL1A1 in tendons, the eye sclera and in the eye lens capsule. Has high activity with the type IV collagen COL4A1, and lower activity with COL1A1. Catalyzes hydroxylation of the first Pro in Gly-Pro-Hyp sequences where Hyp is 4-hydroxyproline. Has no activity on substrates that have proline instead of 4-hydroxyproline in the third position. This chain is Prolyl 3-hydroxylase 2, found in Mus musculus (Mouse).